The sequence spans 902 residues: Proline-rich transmembrane protein 4 (902 aa).

The N-terminal stretch at 1–18 is a signal peptide; that stretch reads MAGRSCLELGLFCWVLLA. 3 disordered regions span residues 72-92, 121-149, and 281-333; these read TETH…EEGD, TPWA…SQPR, and SPSS…LLDD. 2 stretches are compositionally biased toward polar residues: residues 122 to 136 and 281 to 302; these read PWAS…SRLS and SPSS…STSG. 5 helical membrane-spanning segments follow: residues 371–391, 393–413, 432–452, 468–488, and 501–521; these read AGAL…LLPW, CPPG…AGTT, LVWL…LGLA, LAAL…GSAV, and GLHA…SCWG. The residue at position 642 (Ser642) is a Phosphoserine. 3 disordered regions span residues 701–723, 774–811, and 839–872; these read AGAN…DFRP, AGPS…SLCG, and PPRP…ASEL. The span at 704 to 717 shows a compositional bias: polar residues; that stretch reads NPTQSTASSPSSDC. Residues 786–798 are compositionally biased toward pro residues; it reads SPAPPELPSPGAW. Composition is skewed to low complexity over residues 799–811 and 843–854; these read PPGS…SLCG and SESSPSLPASGS.

It localises to the membrane. The chain is Proline-rich transmembrane protein 4 (Prrt4) from Mus musculus (Mouse).